Here is a 69-residue protein sequence, read N- to C-terminus: DNA-directed RNA polymerase subunit omega (69 aa).

It belongs to the RNA polymerase subunit omega family. As to quaternary structure, the RNAP catalytic core consists of 2 alpha, 1 beta, 1 beta' and 1 omega subunit. When a sigma factor is associated with the core the holoenzyme is formed, which can initiate transcription.

It catalyses the reaction RNA(n) + a ribonucleoside 5'-triphosphate = RNA(n+1) + diphosphate. Its function is as follows. Promotes RNA polymerase assembly. Latches the N- and C-terminal regions of the beta' subunit thereby facilitating its interaction with the beta and alpha subunits. This chain is DNA-directed RNA polymerase subunit omega, found in Hahella chejuensis (strain KCTC 2396).